A 739-amino-acid polypeptide reads, in one-letter code: Phosphoribosylformylglycinamidine synthase subunit PurL (739 aa).

Residue H53 is part of the active site. ATP contacts are provided by Y56 and K95. E97 lines the Mg(2+) pocket. Residues 98-101 (SHNH) and R120 each bind substrate. H99 acts as the Proton acceptor in catalysis. Mg(2+) is bound at residue D121. Residue Q244 participates in substrate binding. Mg(2+) is bound at residue D274. Substrate is bound at residue 318-320 (ESQ). ATP is bound by residues D501 and G538. A Mg(2+)-binding site is contributed by N539. S541 is a binding site for substrate.

It belongs to the FGAMS family. In terms of assembly, monomer. Part of the FGAM synthase complex composed of 1 PurL, 1 PurQ and 2 PurS subunits.

The protein resides in the cytoplasm. The catalysed reaction is N(2)-formyl-N(1)-(5-phospho-beta-D-ribosyl)glycinamide + L-glutamine + ATP + H2O = 2-formamido-N(1)-(5-O-phospho-beta-D-ribosyl)acetamidine + L-glutamate + ADP + phosphate + H(+). Its pathway is purine metabolism; IMP biosynthesis via de novo pathway; 5-amino-1-(5-phospho-D-ribosyl)imidazole from N(2)-formyl-N(1)-(5-phospho-D-ribosyl)glycinamide: step 1/2. Its function is as follows. Part of the phosphoribosylformylglycinamidine synthase complex involved in the purines biosynthetic pathway. Catalyzes the ATP-dependent conversion of formylglycinamide ribonucleotide (FGAR) and glutamine to yield formylglycinamidine ribonucleotide (FGAM) and glutamate. The FGAM synthase complex is composed of three subunits. PurQ produces an ammonia molecule by converting glutamine to glutamate. PurL transfers the ammonia molecule to FGAR to form FGAM in an ATP-dependent manner. PurS interacts with PurQ and PurL and is thought to assist in the transfer of the ammonia molecule from PurQ to PurL. The sequence is that of Phosphoribosylformylglycinamidine synthase subunit PurL from Listeria welshimeri serovar 6b (strain ATCC 35897 / DSM 20650 / CCUG 15529 / CIP 8149 / NCTC 11857 / SLCC 5334 / V8).